The chain runs to 799 residues: Phenylalanine--tRNA ligase beta subunit (799 aa).

The 108-residue stretch at 40–147 folds into the tRNA-binding domain; the sequence is KSHLSSVITV…KDTTLGISVR (108 aa). A B5 domain is found at 402-479; it reads SKTVTIETNL…RTIGYASIRT (78 aa). The Mg(2+) site is built by Asp-457, Asp-463, Glu-466, and Glu-467. The 93-residue stretch at 707–799 folds into the FDX-ACB domain; that stretch reads SHFPQGQLDL…TAKSNGYSLR (93 aa).

The protein belongs to the phenylalanyl-tRNA synthetase beta subunit family. Type 1 subfamily. As to quaternary structure, tetramer of two alpha and two beta subunits. It depends on Mg(2+) as a cofactor.

It is found in the cytoplasm. The catalysed reaction is tRNA(Phe) + L-phenylalanine + ATP = L-phenylalanyl-tRNA(Phe) + AMP + diphosphate + H(+). The protein is Phenylalanine--tRNA ligase beta subunit of Leptospira biflexa serovar Patoc (strain Patoc 1 / Ames).